Consider the following 494-residue polypeptide: UPF0371 protein SEQ_1471 (494 aa).

The protein belongs to the UPF0371 family.

The sequence is that of UPF0371 protein SEQ_1471 from Streptococcus equi subsp. equi (strain 4047).